Reading from the N-terminus, the 791-residue chain is Pleckstrin homology domain-containing family H member 3 (791 aa).

A signal peptide spans 1–18 (MPLPGGLWWLLCCRRGFT). A compositionally biased stretch (acidic residues) spans 29-41 (LSGDGDEDEDDET). The tract at residues 29-71 (LSGDGDEDEDDETFELRSPSPAGGGRGSLDVTLTQPTRNGPIT) is disordered. Position 30 is a phosphoserine (serine 30). Residues 59 to 71 (VTLTQPTRNGPIT) show a composition bias toward polar residues. Residues 95-199 (DVIVKGWLYR…WGVALREVIA (105 aa)) enclose the PH domain. The MyTH4 domain occupies 237–399 (HTSSALYAPL…PSLAEISALS (163 aa)). The region spanning 404-755 (LLCTVHCPGA…ANPSPERPCS (352 aa)) is the FERM domain. The span at 549 to 559 (PRGPLPLLDRL) shows a compositional bias: low complexity. Disordered stretches follow at residues 549 to 580 (PRGP…PPPS) and 593 to 623 (LAKR…GGGS). Residues 594–605 (AKRRAERARRIG) show a composition bias toward basic residues. At arginine 636 the chain carries Omega-N-methylarginine. The segment at 748-791 (PSPERPCSSSGPPSQDLSDTSPPSQHQVLEKPQGQSGCLRQLQD) is disordered. A compositionally biased stretch (polar residues) spans 754–791 (CSSSGPPSQDLSDTSPPSQHQVLEKPQGQSGCLRQLQD).

In Rattus norvegicus (Rat), this protein is Pleckstrin homology domain-containing family H member 3 (Plekhh3).